The chain runs to 339 residues: Heat-inducible transcription repressor HrcA (339 aa).

The protein belongs to the HrcA family.

Functionally, negative regulator of class I heat shock genes (grpE-dnaK-dnaJ and groELS operons). Prevents heat-shock induction of these operons. This Parafrankia sp. (strain EAN1pec) protein is Heat-inducible transcription repressor HrcA.